Consider the following 325-residue polypeptide: Aspartate carbamoyltransferase catalytic subunit (325 aa).

Residues Arg-55 and Thr-56 each coordinate carbamoyl phosphate. Lys-83 provides a ligand contact to L-aspartate. The carbamoyl phosphate site is built by Arg-105, His-135, and Gln-138. Residues Arg-176 and Arg-230 each contribute to the L-aspartate site. Residues Gly-271 and Pro-272 each contribute to the carbamoyl phosphate site.

It belongs to the aspartate/ornithine carbamoyltransferase superfamily. ATCase family. As to quaternary structure, heterododecamer (2C3:3R2) of six catalytic PyrB chains organized as two trimers (C3), and six regulatory PyrI chains organized as three dimers (R2).

It carries out the reaction carbamoyl phosphate + L-aspartate = N-carbamoyl-L-aspartate + phosphate + H(+). It functions in the pathway pyrimidine metabolism; UMP biosynthesis via de novo pathway; (S)-dihydroorotate from bicarbonate: step 2/3. In terms of biological role, catalyzes the condensation of carbamoyl phosphate and aspartate to form carbamoyl aspartate and inorganic phosphate, the committed step in the de novo pyrimidine nucleotide biosynthesis pathway. In Streptomyces avermitilis (strain ATCC 31267 / DSM 46492 / JCM 5070 / NBRC 14893 / NCIMB 12804 / NRRL 8165 / MA-4680), this protein is Aspartate carbamoyltransferase catalytic subunit.